A 406-amino-acid chain; its full sequence is Cysteine desulfurase (406 aa).

Lys226 is modified (N6-(pyridoxal phosphate)lysine). Residue Cys364 is the Cysteine persulfide intermediate of the active site.

It belongs to the class-V pyridoxal-phosphate-dependent aminotransferase family. Csd subfamily. Homodimer. Interacts with SufE and the SufBCD complex composed of SufB, SufC and SufD. The interaction with SufE is required to mediate the direct transfer of the sulfur atom from the S-sulfanylcysteine. Pyridoxal 5'-phosphate serves as cofactor.

The protein resides in the cytoplasm. The catalysed reaction is (sulfur carrier)-H + L-cysteine = (sulfur carrier)-SH + L-alanine. It carries out the reaction L-selenocysteine + AH2 = hydrogenselenide + L-alanine + A + H(+). The protein operates within cofactor biosynthesis; iron-sulfur cluster biosynthesis. In terms of biological role, cysteine desulfurases mobilize the sulfur from L-cysteine to yield L-alanine, an essential step in sulfur metabolism for biosynthesis of a variety of sulfur-containing biomolecules. Component of the suf operon, which is activated and required under specific conditions such as oxidative stress and iron limitation. Acts as a potent selenocysteine lyase in vitro, that mobilizes selenium from L-selenocysteine. Selenocysteine lyase activity is however unsure in vivo. The sequence is that of Cysteine desulfurase from Yersinia pseudotuberculosis serotype IB (strain PB1/+).